Reading from the N-terminus, the 469-residue chain is MTVKTRFAPSPTGFLHVGGARTALYSWLHARANQGEFVLRIEDTDLERSTQEAVDAILEGMEWLNLNWDEGPYYQTKRFDRYNEIIDQMLKAGTAYKCYCSKERLEAVREEQAAKGERQKYDGCCRGAAPRAEGEPHVVRFLNPQGGSVVFDDHVRGRIEIANEELDDLIIRRTDGSPTYNFCVVVDDWDMGITHVVRGEDHINNTPRQINILKALGAPIPEYAHVSMILGDDGAKLSKRHGAVSVMQYRDDGYLPEALLNYLVRLGWSHGDQEIFSMDELVEFFRLDDINKAASAFNSEKLLWLNQHYIKALDPEYVAKHLEWHMKDQGIDTSNGPALADVVTALSERAKTLKELAASSRYFYEDFEEFDADQAKKHLRGVALEPLKLVQQKLAALTEWTREAIHQAIEETATELEVGMGKVGMPLRVAVTGAGQSPGLDITLELIGKARSEQRISKAVDFVADRINS.

A 'HIGH' region motif is present at residues 9–19 (PSPTGFLHVGG). A 'KMSKS' region motif is present at residues 236 to 240 (KLSKR). Residue Lys-239 participates in ATP binding.

Belongs to the class-I aminoacyl-tRNA synthetase family. Glutamate--tRNA ligase type 1 subfamily. In terms of assembly, monomer.

It localises to the cytoplasm. The enzyme catalyses tRNA(Glu) + L-glutamate + ATP = L-glutamyl-tRNA(Glu) + AMP + diphosphate. In terms of biological role, catalyzes the attachment of glutamate to tRNA(Glu) in a two-step reaction: glutamate is first activated by ATP to form Glu-AMP and then transferred to the acceptor end of tRNA(Glu). This Shewanella amazonensis (strain ATCC BAA-1098 / SB2B) protein is Glutamate--tRNA ligase.